The following is a 332-amino-acid chain: Probable endo-beta-1,4-glucanase B (332 aa).

The signal sequence occupies residues 1–18; that stretch reads MKFQSTLLLAAAAGSALA. Residues N38 and N100 are each glycosylated (N-linked (GlcNAc...) asparagine). E160 serves as the catalytic Proton donor. The N-linked (GlcNAc...) asparagine glycan is linked to N212. Residue E267 is the Nucleophile of the active site. N-linked (GlcNAc...) asparagine glycosylation occurs at N289.

The protein belongs to the glycosyl hydrolase 5 (cellulase A) family.

It is found in the secreted. It carries out the reaction Endohydrolysis of (1-&gt;4)-beta-D-glucosidic linkages in cellulose, lichenin and cereal beta-D-glucans.. Has endoglucanase activity on substrates containing beta-1,4 glycosidic bonds, like in carboxymethylcellulose (CMC), hydroxyethylcellulose (HEC) and beta-glucan. Involved in the degradation of complex natural cellulosic substrates. The protein is Probable endo-beta-1,4-glucanase B (eglB) of Aspergillus kawachii (strain NBRC 4308) (White koji mold).